Here is a 271-residue protein sequence, read N- to C-terminus: Aquaporin-2 (271 aa).

Residues 1-11 are Cytoplasmic-facing; sequence MWELRSIAFSR. The chain crosses the membrane as a helical span at residues 12-32; it reads AVLAEFLATLLFVFFGLGSAL. Topologically, residues 33–40 are extracellular; the sequence is NWPQALPS. The helical transmembrane segment at 41–59 threads the bilayer; sequence VLQIAMAFGLAIGTLVQAL. Over 60 to 64 the chain is Cytoplasmic; that stretch reads GHVSG. An intramembrane region (discontinuously helical) is located at residues 65–74; the sequence is AHINPAVTVA. The NPA 1 motif lies at 68–70; sequence NPA. Topologically, residues 75–85 are cytoplasmic; it reads CLVGCHVSFLR. Residues 86 to 107 form a helical membrane-spanning segment; that stretch reads AVFYVAAQLLGAVAGAALLHEI. Residues 108 to 127 lie on the Extracellular side of the membrane; that stretch reads TPPAIRGDLAVNALNNNSTA. Residues Asn123 and Asn124 are each glycosylated (N-linked (GlcNAc...) asparagine). Residues 128 to 148 form a helical membrane-spanning segment; sequence GQAVTVELFLTLQLVLCIFPS. The Cytoplasmic segment spans residues 149–156; the sequence is TDKRRGKQ. The helical transmembrane segment at 157–176 threads the bilayer; the sequence is LGHPALSIGFSVALGHLLGI. Residues 177–180 lie on the Extracellular side of the membrane; the sequence is HYTG. Residues 181–193 constitute an intramembrane region (discontinuously helical); the sequence is CSMNPARSLAPAI. The NPA 2 motif lies at 184–186; the sequence is NPA. At 194 to 201 the chain is on the extracellular side; that stretch reads VTGKFDDH. Residues 202–222 traverse the membrane as a helical segment; it reads WVFWIGPLVGAIVASLLYNYV. Residues 223 to 271 are Cytoplasmic-facing; that stretch reads LFPPAKSLSERLAVLKGLEPDTDWEEREVRRRQSVELHSPQSLPRGTKA. The tract at residues 249–271 is disordered; sequence REVRRRQSVELHSPQSLPRGTKA. Position 256 is a phosphoserine (Ser256). Over residues 261-271 the composition is skewed to polar residues; the sequence is SPQSLPRGTKA.

It belongs to the MIP/aquaporin (TC 1.A.8) family. As to quaternary structure, homotetramer. In terms of processing, ser-256 phosphorylation is necessary and sufficient for expression at the apical membrane. Endocytosis is not phosphorylation-dependent. N-glycosylated. As to expression, expressed in renal collecting tubules.

Its subcellular location is the apical cell membrane. The protein resides in the basolateral cell membrane. It is found in the cell membrane. The protein localises to the cytoplasmic vesicle membrane. It localises to the golgi apparatus. Its subcellular location is the trans-Golgi network membrane. The catalysed reaction is H2O(in) = H2O(out). It catalyses the reaction glycerol(in) = glycerol(out). In terms of biological role, forms a water-specific channel that provides the plasma membranes of renal collecting duct with high permeability to water, thereby permitting water to move in the direction of an osmotic gradient. Could also be permeable to glycerol. The protein is Aquaporin-2 of Ovis aries (Sheep).